We begin with the raw amino-acid sequence, 258 residues long: Ribosomal RNA small subunit methyltransferase J (258 aa).

Residues 123–124 (ER) and Asp-177 contribute to the S-adenosyl-L-methionine site. The segment at 232–258 (IDGPKPSHSLEGKSSRYDIYPKKALKA) is disordered. The segment covering 239-252 (HSLEGKSSRYDIYP) has biased composition (basic and acidic residues).

This sequence belongs to the methyltransferase superfamily. RsmJ family.

The protein localises to the cytoplasm. It catalyses the reaction guanosine(1516) in 16S rRNA + S-adenosyl-L-methionine = N(2)-methylguanosine(1516) in 16S rRNA + S-adenosyl-L-homocysteine + H(+). In terms of biological role, specifically methylates the guanosine in position 1516 of 16S rRNA. This Pseudomonas putida (strain W619) protein is Ribosomal RNA small subunit methyltransferase J.